The following is a 320-amino-acid chain: o-succinylbenzoate synthase (320 aa).

The active-site Proton donor is lysine 133. Residues aspartate 161, glutamate 190, and aspartate 213 each coordinate Mg(2+). Residue lysine 235 is the Proton acceptor of the active site.

It belongs to the mandelate racemase/muconate lactonizing enzyme family. MenC type 1 subfamily. A divalent metal cation serves as cofactor.

The enzyme catalyses (1R,6R)-6-hydroxy-2-succinyl-cyclohexa-2,4-diene-1-carboxylate = 2-succinylbenzoate + H2O. The protein operates within quinol/quinone metabolism; 1,4-dihydroxy-2-naphthoate biosynthesis; 1,4-dihydroxy-2-naphthoate from chorismate: step 4/7. Its pathway is quinol/quinone metabolism; menaquinone biosynthesis. Converts 2-succinyl-6-hydroxy-2,4-cyclohexadiene-1-carboxylate (SHCHC) to 2-succinylbenzoate (OSB). This Shigella sonnei (strain Ss046) protein is o-succinylbenzoate synthase.